The chain runs to 513 residues: ATP synthase subunit alpha (513 aa).

169–176 serves as a coordination point for ATP; it reads GDRQVGKT.

This sequence belongs to the ATPase alpha/beta chains family. In terms of assembly, F-type ATPases have 2 components, CF(1) - the catalytic core - and CF(0) - the membrane proton channel. CF(1) has five subunits: alpha(3), beta(3), gamma(1), delta(1), epsilon(1). CF(0) has three main subunits: a(1), b(2) and c(9-12). The alpha and beta chains form an alternating ring which encloses part of the gamma chain. CF(1) is attached to CF(0) by a central stalk formed by the gamma and epsilon chains, while a peripheral stalk is formed by the delta and b chains.

The protein resides in the cell inner membrane. It carries out the reaction ATP + H2O + 4 H(+)(in) = ADP + phosphate + 5 H(+)(out). In terms of biological role, produces ATP from ADP in the presence of a proton gradient across the membrane. The alpha chain is a regulatory subunit. The polypeptide is ATP synthase subunit alpha (Aeromonas hydrophila subsp. hydrophila (strain ATCC 7966 / DSM 30187 / BCRC 13018 / CCUG 14551 / JCM 1027 / KCTC 2358 / NCIMB 9240 / NCTC 8049)).